Reading from the N-terminus, the 324-residue chain is NADH-ubiquinone oxidoreductase chain 1 (324 aa).

A run of 9 helical transmembrane segments spans residues 9–29 (IINP…LTLL), 43–63 (PNIV…KLFI), 75–95 (FLFL…WAPM), 106–126 (LGVL…LGSG), 146–166 (ISYE…TGGF), 177–197 (SIWL…STLA), 237–257 (ILLM…IPAF), 259–279 (ELTA…FLWV), and 299–319 (FLPL…AMAG).

Belongs to the complex I subunit 1 family.

The protein localises to the mitochondrion inner membrane. The enzyme catalyses a ubiquinone + NADH + 5 H(+)(in) = a ubiquinol + NAD(+) + 4 H(+)(out). Functionally, core subunit of the mitochondrial membrane respiratory chain NADH dehydrogenase (Complex I) that is believed to belong to the minimal assembly required for catalysis. Complex I functions in the transfer of electrons from NADH to the respiratory chain. The immediate electron acceptor for the enzyme is believed to be ubiquinone. The chain is NADH-ubiquinone oxidoreductase chain 1 (MT-ND1) from Salmo salar (Atlantic salmon).